Consider the following 271-residue polypeptide: tRNA pseudouridine synthase A (271 aa).

The Nucleophile role is filled by D52. Substrate is bound at residue Y110.

The protein belongs to the tRNA pseudouridine synthase TruA family. In terms of assembly, homodimer.

It carries out the reaction uridine(38/39/40) in tRNA = pseudouridine(38/39/40) in tRNA. Its function is as follows. Formation of pseudouridine at positions 38, 39 and 40 in the anticodon stem and loop of transfer RNAs. This chain is tRNA pseudouridine synthase A, found in Burkholderia mallei (strain NCTC 10247).